A 952-amino-acid chain; its full sequence is MMENKRSLLKITQNIQNVTSKLAKLREILDLEMKMIDATELCNQQLVVKFLNSLPQEQGGLIEFVTTHYVYFLFKNCTLSPQFLERGTEHEEVVSKCLHLLKSAVECMSQITSDLFGCQGSGLLSNRNILSELQLFLTWAQNVNRNSTELTSLPTTPVQTFLCAEEIMSLLYLSKLYNTIPSVQFNMPNFQTMGVLEQWTISLYTSTVGLPTGPYQLPNATELACALVSRHADLFISPTHVSQPLLTFPFAKKRANLIFQSYLNNPQASITETGPLVQLREADLQTLDTTFFFLYDYIFEALSNNQAYSCSAATVNNFIARCVDSLTDLGSNLLEASTASRGPSNNIDAFKGFLLRAGLTEKNCSDFKTLLLLNKSNGHTQWKQFPKLLRLVTQLTLTAHYFYACLQQYSPTSLARCKITDTLKMAAAEQMVEYQASGSGKQSKPFEWTIPGILSFFIPQPPTELLQVMSDNISSPYMQSFFWISAHRAWQLKPHTILQRELSPTPLPSSPCNEEDVKKYCREIQVGDTAYQLNIVKCDTFELEFIKTHAFPILQNIFSMDLHIHRAMVQLRWLITFAADAPPFLSTLRKPLILLYFQINDIISQNRVDTSFINMLDYTKDVLTAVQEAVPSAEFSPNLINYLFLTHFSSSLKILMDTVNEFVTETTTVAESVASLARVGATICHSVFSFNTRNDTLEFPIAGENGDEIFQISVPAFKSTVANLQQNCYDVIVLLNESSRELHASYLDLQVISSDIDSMRNHSIKFDHASLNFKGMKDFYIKCFALQNKLASKIANTCCYSLTRRFAPLFEPELISLQTVENILNFSDTVDDPSVFLSGINQPMGCVPPNCQQGAVEKLSKQDVLDIRELAPDFTEGASSAPANATVIKHNFTGTFDKVSIDLDQSSLNTEFTFADKEYNLRTLRQLKLIFLEDLLSNTPQSPPPTDPALTN.

Residues tryptophan 490–asparagine 952 form an interaction with large tegument protein region.

Belongs to the herpesviridae inner tegument protein family. In terms of assembly, interacts (via C-terminus) with the large tegument protein/LTP (via N-terminus).

It localises to the virion tegument. The protein resides in the host cytoplasm. It is found in the host nucleus. Its subcellular location is the host Golgi apparatus. The protein localises to the host trans-Golgi network. Functionally, plays an essential role in cytoplasmic secondary envelopment during viral egress. Interacts with the capsid via the large tegument protein/LTP and participates in its transport to the host trans-Golgi network (TGN) where secondary envelopment occurs. Modulates tegumentation and capsid accumulation at the viral assembly complex. The chain is Inner tegument protein (63) from Connochaetes taurinus (Blue wildebeest).